Consider the following 295-residue polypeptide: UDP-N-acetylenolpyruvoylglucosamine reductase (295 aa).

Positions 24–188 (KVGGDAEIFF…LKAVFKVNKG (165 aa)) constitute an FAD-binding PCMH-type domain. Arg-168 is a catalytic residue. Ser-217 (proton donor) is an active-site residue. Residue Glu-287 is part of the active site.

This sequence belongs to the MurB family. Requires FAD as cofactor.

It localises to the cytoplasm. The catalysed reaction is UDP-N-acetyl-alpha-D-muramate + NADP(+) = UDP-N-acetyl-3-O-(1-carboxyvinyl)-alpha-D-glucosamine + NADPH + H(+). Its pathway is cell wall biogenesis; peptidoglycan biosynthesis. Functionally, cell wall formation. This chain is UDP-N-acetylenolpyruvoylglucosamine reductase, found in Rickettsia akari (strain Hartford).